Reading from the N-terminus, the 347-residue chain is UDP-rhamnose/UDP-galactose transporter 1 (347 aa).

Helical transmembrane passes span 11–31 (AVSD…IIMA), 43–63 (FGFA…VGMV), 80–100 (LLWF…SLML), 103–123 (VGFY…LEWI), 132–152 (EVKA…VTDV), 159–179 (FICA…IGSL), 195–215 (APIQ…LLSG), 223–243 (MTYG…FCNI), 256–276 (SFQV…WLLF), and 285–305 (IAGM…VDIE).

It belongs to the TPT transporter family. TPT (TC 2.A.7.9) subfamily. As to expression, widely expressed in the whole plant.

Its subcellular location is the golgi apparatus membrane. Functionally, nucleotide-sugar transporter that transports UDP-rhamnose or UDP-galactose and UMP in a strict counter-exchange mode. This Arabidopsis thaliana (Mouse-ear cress) protein is UDP-rhamnose/UDP-galactose transporter 1.